The primary structure comprises 374 residues: F-box/LRR-repeat protein 8 (374 aa).

The F-box domain occupies 2–48 (GELVDNLPEEVLALIFRDLPLRDLAVATRVCRAWAAAAANSTVWSDK).

As to quaternary structure, directly interacts with SKP1 and CUL1. In terms of tissue distribution, widely expressed during embryogenesis and in adult tissues.

In terms of biological role, substrate-recognition component of the SCF (SKP1-CUL1-F-box protein)-type E3 ubiquitin ligase complex. In Mus musculus (Mouse), this protein is F-box/LRR-repeat protein 8 (Fbxl8).